We begin with the raw amino-acid sequence, 261 residues long: 5'-nucleotidase SurE (261 aa).

A divalent metal cation contacts are provided by D8, D9, S43, and N96.

Belongs to the SurE nucleotidase family. A divalent metal cation serves as cofactor.

It is found in the cytoplasm. It catalyses the reaction a ribonucleoside 5'-phosphate + H2O = a ribonucleoside + phosphate. Functionally, nucleotidase that shows phosphatase activity on nucleoside 5'-monophosphates. The protein is 5'-nucleotidase SurE of Cereibacter sphaeroides (strain ATCC 17025 / ATH 2.4.3) (Rhodobacter sphaeroides).